The sequence spans 205 residues: Ribosomal RNA small subunit methyltransferase G (205 aa).

S-adenosyl-L-methionine-binding positions include Gly-73, Leu-78, 124–125, and Arg-139; that span reads VE.

This sequence belongs to the methyltransferase superfamily. RNA methyltransferase RsmG family.

The protein resides in the cytoplasm. It catalyses the reaction guanosine(527) in 16S rRNA + S-adenosyl-L-methionine = N(7)-methylguanosine(527) in 16S rRNA + S-adenosyl-L-homocysteine. Functionally, specifically methylates the N7 position of guanine in position 527 of 16S rRNA. This Erwinia tasmaniensis (strain DSM 17950 / CFBP 7177 / CIP 109463 / NCPPB 4357 / Et1/99) protein is Ribosomal RNA small subunit methyltransferase G.